The primary structure comprises 170 residues: MAKIGLFYGTQTGVTQTIAESIQQEFGGESIVDLNDIANADASDLNAYDYLIIGCPTWNVGELQSDWEGIYDDLDSVNFQGKKVAYFGAGDQVGYSDNFQDAMGILEEKISSLGSQTVGYWPIEGYDFNESKAVRNNQFVGLAIDEDNQPDLTKNRIKTWVSQLKSEFGL.

Residues 4–165 enclose the Flavodoxin-like domain; that stretch reads IGLFYGTQTG…RIKTWVSQLK (162 aa).

Belongs to the flavodoxin family. It depends on FMN as a cofactor.

Low-potential electron donor to a number of redox enzymes. The protein is Flavodoxin (isiB) of Synechococcus elongatus (strain ATCC 33912 / PCC 7942 / FACHB-805) (Anacystis nidulans R2).